Here is a 170-residue protein sequence, read N- to C-terminus: Small ribosomal subunit protein bS18c (170 aa).

Disordered stretches follow at residues 1-59 (MYIS…IGPG) and 151-170 (NLRNSNQNLRNNNRNLSSDC). 7 consecutive repeats follow at residues 4–10 (SKQPFRK), 11–17 (SKQPFRK), 18–24 (SKQTFHK), 25–31 (SKQPFRK), 32–38 (FKQPFRK), 39–45 (SKQPFRK), and 46–52 (SKQPFRR). Residues 4 to 52 (SKQPFRKSKQPFRKSKQTFHKSKQPFRKFKQPFRKSKQPFRKSKQPFRR) form a 7 X 7 AA tandem repeats region. Residues 7–55 (PFRKSKQPFRKSKQTFHKSKQPFRKFKQPFRKSKQPFRKSKQPFRRRSR) show a composition bias toward basic residues.

It belongs to the bacterial ribosomal protein bS18 family. In terms of assembly, part of the 30S ribosomal subunit.

Its subcellular location is the plastid. It is found in the chloroplast. The chain is Small ribosomal subunit protein bS18c (rps18) from Zea mays (Maize).